The chain runs to 464 residues: Histidine--tRNA ligase (464 aa).

It belongs to the class-II aminoacyl-tRNA synthetase family. Homodimer.

It localises to the cytoplasm. It carries out the reaction tRNA(His) + L-histidine + ATP = L-histidyl-tRNA(His) + AMP + diphosphate + H(+). This is Histidine--tRNA ligase from Stenotrophomonas maltophilia (strain K279a).